Reading from the N-terminus, the 322-residue chain is HPr kinase/phosphorylase (322 aa).

Catalysis depends on residues histidine 142 and lysine 163. 157–164 (GASGVGKS) provides a ligand contact to ATP. Serine 164 serves as a coordination point for Mg(2+). The active-site Proton acceptor; for phosphorylation activity. Proton donor; for dephosphorylation activity is the aspartate 181. The important for the catalytic mechanism of both phosphorylation and dephosphorylation stretch occupies residues 205–214 (MEIRGIGIID). Glutamate 206 serves as a coordination point for Mg(2+). Arginine 247 is a catalytic residue. Positions 268-273 (PVKVGR) are important for the catalytic mechanism of dephosphorylation.

It belongs to the HPrK/P family. In terms of assembly, homohexamer. Requires Mg(2+) as cofactor.

The catalysed reaction is [HPr protein]-L-serine + ATP = [HPr protein]-O-phospho-L-serine + ADP + H(+). It catalyses the reaction [HPr protein]-O-phospho-L-serine + phosphate + H(+) = [HPr protein]-L-serine + diphosphate. In terms of biological role, catalyzes the ATP- as well as the pyrophosphate-dependent phosphorylation of a specific serine residue in HPr, a phosphocarrier protein of the phosphoenolpyruvate-dependent sugar phosphotransferase system (PTS). HprK/P also catalyzes the pyrophosphate-producing, inorganic phosphate-dependent dephosphorylation (phosphorolysis) of seryl-phosphorylated HPr (P-Ser-HPr). The two antagonistic activities of HprK/P are regulated by several intracellular metabolites, which change their concentration in response to the absence or presence of rapidly metabolisable carbon sources (glucose, fructose, etc.) in the growth medium. Therefore, by controlling the phosphorylation state of HPr, HPrK/P is a sensor enzyme that plays a major role in the regulation of carbon metabolism and sugar transport: it mediates carbon catabolite repression (CCR), and regulates PTS-catalyzed carbohydrate uptake and inducer exclusion. In Lactobacillus acidophilus (strain ATCC 700396 / NCK56 / N2 / NCFM), this protein is HPr kinase/phosphorylase.